Here is a 236-residue protein sequence, read N- to C-terminus: Uridylate kinase (236 aa).

An ATP-binding site is contributed by 10-13 (KLSG). Glycine 52 serves as a coordination point for UMP. ATP contacts are provided by glycine 53 and arginine 57. UMP is bound by residues aspartate 72 and 133–140 (TGNPFFTT). 3 residues coordinate ATP: threonine 160, tyrosine 166, and aspartate 169.

Belongs to the UMP kinase family. In terms of assembly, homohexamer.

Its subcellular location is the cytoplasm. It carries out the reaction UMP + ATP = UDP + ADP. Its pathway is pyrimidine metabolism; CTP biosynthesis via de novo pathway; UDP from UMP (UMPK route): step 1/1. Inhibited by UTP. Catalyzes the reversible phosphorylation of UMP to UDP. The protein is Uridylate kinase of Phocaeicola vulgatus (strain ATCC 8482 / DSM 1447 / JCM 5826 / CCUG 4940 / NBRC 14291 / NCTC 11154) (Bacteroides vulgatus).